A 138-amino-acid polypeptide reads, in one-letter code: Cysteine desulfuration protein SufE (138 aa).

C51 (cysteine persulfide intermediate) is an active-site residue.

It belongs to the SufE family. Homodimer. Interacts with SufS.

It localises to the cytoplasm. It functions in the pathway cofactor biosynthesis; iron-sulfur cluster biosynthesis. Its function is as follows. Participates in cysteine desulfuration mediated by SufS. Cysteine desulfuration mobilizes sulfur from L-cysteine to yield L-alanine and constitutes an essential step in sulfur metabolism for biosynthesis of a variety of sulfur-containing biomolecules. Functions as a sulfur acceptor for SufS, by mediating the direct transfer of the sulfur atom from the S-sulfanylcysteine of SufS, an intermediate product of cysteine desulfuration process. The sequence is that of Cysteine desulfuration protein SufE from Escherichia fergusonii (strain ATCC 35469 / DSM 13698 / CCUG 18766 / IAM 14443 / JCM 21226 / LMG 7866 / NBRC 102419 / NCTC 12128 / CDC 0568-73).